A 2378-amino-acid chain; its full sequence is Dimodular nonribosomal peptide synthase (2378 aa).

2 consecutive Carrier domains span residues 961–1036 and 2036–2111; these read APRT…DLAQ and GPRT…EMGS. O-(pantetheine 4'-phosphoryl)serine is present on residues serine 996 and serine 2071.

It belongs to the ATP-dependent AMP-binding enzyme family. The cofactor is pantetheine 4'-phosphate.

It catalyses the reaction holo-[peptidyl-carrier protein] + L-threonine + ATP = L-threonyl-[peptidyl-carrier protein] + AMP + diphosphate. It carries out the reaction holo-[peptidyl-carrier protein] + glycine + ATP = glycyl-[peptidyl-carrier protein] + AMP + diphosphate. Its pathway is siderophore biosynthesis; bacillibactin biosynthesis. Functionally, specifically adenylates L-threonine and, to a lesser extent, glycine and covalently loads both amino acids onto their corresponding peptidyl carrier domains. In Bacillus subtilis (strain 168), this protein is Dimodular nonribosomal peptide synthase (dhbF).